The sequence spans 125 residues: Fluoride-specific ion channel FluC (125 aa).

Transmembrane regions (helical) follow at residues 1–21 (MIQALLVAVGGAIGSLLRYYV), 32–52 (AFPWGTLAVNVVGCFVIGVFA), 68–88 (LLITGFLGGFTTFSAFSLDAI), and 101–121 (IYTVASVGLSMAAVMAGLAVM). Na(+) is bound by residues Gly-75 and Thr-78.

It belongs to the fluoride channel Fluc/FEX (TC 1.A.43) family.

The protein localises to the cell inner membrane. The enzyme catalyses fluoride(in) = fluoride(out). With respect to regulation, na(+) is not transported, but it plays an essential structural role and its presence is essential for fluoride channel function. In terms of biological role, fluoride-specific ion channel. Important for reducing fluoride concentration in the cell, thus reducing its toxicity. In Rhizobium leguminosarum bv. trifolii (strain WSM2304), this protein is Fluoride-specific ion channel FluC.